A 100-amino-acid chain; its full sequence is Aspartyl/glutamyl-tRNA(Asn/Gln) amidotransferase subunit C (100 aa).

It belongs to the GatC family. Heterotrimer of A, B and C subunits.

The catalysed reaction is L-glutamyl-tRNA(Gln) + L-glutamine + ATP + H2O = L-glutaminyl-tRNA(Gln) + L-glutamate + ADP + phosphate + H(+). The enzyme catalyses L-aspartyl-tRNA(Asn) + L-glutamine + ATP + H2O = L-asparaginyl-tRNA(Asn) + L-glutamate + ADP + phosphate + 2 H(+). Its function is as follows. Allows the formation of correctly charged Asn-tRNA(Asn) or Gln-tRNA(Gln) through the transamidation of misacylated Asp-tRNA(Asn) or Glu-tRNA(Gln) in organisms which lack either or both of asparaginyl-tRNA or glutaminyl-tRNA synthetases. The reaction takes place in the presence of glutamine and ATP through an activated phospho-Asp-tRNA(Asn) or phospho-Glu-tRNA(Gln). This is Aspartyl/glutamyl-tRNA(Asn/Gln) amidotransferase subunit C from Rickettsia canadensis (strain McKiel).